The following is a 184-amino-acid chain: Urease accessory protein UreE (184 aa).

The disordered stretch occupies residues 147–184; sequence EHHGHSHSHSHSHDHDHDHDHDHQHGPSCSHGHHHGHR. The span at 157-171 shows a compositional bias: basic and acidic residues; sequence HSHDHDHDHDHDHQH.

Belongs to the UreE family.

The protein resides in the cytoplasm. Its function is as follows. Involved in urease metallocenter assembly. Binds nickel. Probably functions as a nickel donor during metallocenter assembly. This Burkholderia mallei (strain ATCC 23344) protein is Urease accessory protein UreE.